A 537-amino-acid polypeptide reads, in one-letter code: Cytochrome c oxidase subunit 1 (537 aa).

A helical transmembrane segment spans residues 22–42 (ILYLLFGLVSGIIGSVFSFII). Glu-45, Ala-48, and Gly-50 together coordinate Ca(2+). His-68 serves as a coordination point for Fe(II)-heme a. The next 8 membrane-spanning stretches (helical) occupy residues 70-90 (ILMIFFFIIPALFGAFGNYLV), 104-124 (VNNFTFWLLPPALMLLLISAL), 152-172 (LAILSLQLTGISSTLGSVNLI), 190-210 (LFAWAIMITSILLLLTLPVLA), 241-261 (LFWFFGHPEVYILIMPAFGVV), 279-299 (MLWAMLSIALLGLMVWSHHLF), 318-338 (IAIPTGIKIFSWLATLTGGAI), and 345-365 (MLYAIGFLILFTIGGLTGVIL). A Cu cation-binding site is contributed by His-247. The segment at residues 247-251 (HPEVY) is a cross-link (1'-histidyl-3'-tyrosine (His-Tyr)). An O2-binding site is contributed by Tyr-251. His-296 and His-297 together coordinate Cu cation. 2 residues coordinate Mg(2+): His-375 and Asp-376. 2 helical membrane passes run 379 to 399 (FVVAHFHYVLSMGALFGLCGA) and 418 to 438 (IQFWILFIGVNIVFGPQHFLG). Residue His-383 participates in heme a3 binding. Position 385 (His-385) interacts with Fe(II)-heme a. Pro-447 contacts Ca(2+). The chain crosses the membrane as a helical span at residues 458–478 (FVSSIGSVISILSLFLFMYVM).

The protein belongs to the heme-copper respiratory oxidase family. Component of the cytochrome c oxidase (complex IV, CIV), a multisubunit enzyme composed of a catalytic core of 3 subunits and several supernumerary subunits. The complex exists as a monomer or a dimer and forms supercomplexes (SCs) in the inner mitochondrial membrane with ubiquinol-cytochrome c oxidoreductase (cytochrome b-c1 complex, complex III, CIII). It depends on heme as a cofactor. Cu cation is required as a cofactor.

The protein resides in the mitochondrion inner membrane. It carries out the reaction 4 Fe(II)-[cytochrome c] + O2 + 8 H(+)(in) = 4 Fe(III)-[cytochrome c] + 2 H2O + 4 H(+)(out). It functions in the pathway energy metabolism; oxidative phosphorylation. Component of the cytochrome c oxidase, the last enzyme in the mitochondrial electron transport chain which drives oxidative phosphorylation. The respiratory chain contains 3 multisubunit complexes succinate dehydrogenase (complex II, CII), ubiquinol-cytochrome c oxidoreductase (cytochrome b-c1 complex, complex III, CIII) and cytochrome c oxidase (complex IV, CIV), that cooperate to transfer electrons derived from NADH and succinate to molecular oxygen, creating an electrochemical gradient over the inner membrane that drives transmembrane transport and the ATP synthase. Cytochrome c oxidase is the component of the respiratory chain that catalyzes the reduction of oxygen to water. Electrons originating from reduced cytochrome c in the intermembrane space (IMS) are transferred via the dinuclear copper A center (CU(A)) of subunit 2 and heme A of subunit 1 to the active site in subunit 1, a binuclear center (BNC) formed by heme A3 and copper B (CU(B)). The BNC reduces molecular oxygen to 2 water molecules using 4 electrons from cytochrome c in the IMS and 4 protons from the mitochondrial matrix. The chain is Cytochrome c oxidase subunit 1 (cox1) from Schizosaccharomyces pombe (strain 972 / ATCC 24843) (Fission yeast).